The following is a 149-amino-acid chain: Transcriptional regulator MraZ (149 aa).

2 consecutive SpoVT-AbrB domains span residues 7-54 (KYVN…GISH) and 83-126 (AVQL…QPQN).

It belongs to the MraZ family. As to quaternary structure, forms oligomers.

Its subcellular location is the cytoplasm. It is found in the nucleoid. This Rickettsia felis (strain ATCC VR-1525 / URRWXCal2) (Rickettsia azadi) protein is Transcriptional regulator MraZ.